Reading from the N-terminus, the 445-residue chain is Ribosomal protein uS12 methylthiotransferase RimO (445 aa).

Positions 4 to 119 (IKVALVSLGC…LLESIKVFLK (116 aa)) constitute an MTTase N-terminal domain. Residues Cys13, Cys48, Cys82, Cys156, Cys160, and Cys163 each coordinate [4Fe-4S] cluster. The Radical SAM core domain maps to 142–372 (TTPTYTAYVR…MILQQSISKD (231 aa)). Residues 375–441 (KEKIGKIYEV…EYDLIGVVYN (67 aa)) form the TRAM domain.

The protein belongs to the methylthiotransferase family. RimO subfamily. [4Fe-4S] cluster serves as cofactor.

Its subcellular location is the cytoplasm. The enzyme catalyses L-aspartate(89)-[ribosomal protein uS12]-hydrogen + (sulfur carrier)-SH + AH2 + 2 S-adenosyl-L-methionine = 3-methylsulfanyl-L-aspartate(89)-[ribosomal protein uS12]-hydrogen + (sulfur carrier)-H + 5'-deoxyadenosine + L-methionine + A + S-adenosyl-L-homocysteine + 2 H(+). Catalyzes the methylthiolation of an aspartic acid residue of ribosomal protein uS12. The polypeptide is Ribosomal protein uS12 methylthiotransferase RimO (Clostridium botulinum (strain Loch Maree / Type A3)).